A 416-amino-acid polypeptide reads, in one-letter code: Probable carboxypeptidase An18g06210 (416 aa).

The first 16 residues, 1–16 (MKSPISLLAAVGVASA), serve as a signal peptide directing secretion. 3 N-linked (GlcNAc...) asparagine glycosylation sites follow: asparagine 54, asparagine 70, and asparagine 129. Aspartate 142 contacts Zn(2+). Glutamate 174 functions as the Proton acceptor in the catalytic mechanism. Glutamate 175 contributes to the Zn(2+) binding site. N-linked (GlcNAc...) asparagine glycans are attached at residues asparagine 187 and asparagine 319.

Belongs to the peptidase M20A family. Zn(2+) serves as cofactor.

It localises to the secreted. The protein is Probable carboxypeptidase An18g06210 of Aspergillus niger (strain ATCC MYA-4892 / CBS 513.88 / FGSC A1513).